A 49-amino-acid polypeptide reads, in one-letter code: Splenin (49 aa).

An LEM-like domain is found at 4–47 (LEDPSVLTKEKLKSELVANNVTLPAGEQRKEVYVELYLQHLTAL). The essential for biological activity stretch occupies residues 32–36 (RKEVY).

The protein belongs to the thymopoietin family.

Functionally, hormone of the spleen with pleiotropic actions on prothymocytes, mature T-cells, the nicotinic acetylcholine receptor, and pituitary corticotrophs. The sequence is that of Splenin (SP) from Bos taurus (Bovine).